A 472-amino-acid chain; its full sequence is Cysteine--tRNA ligase (472 aa).

Cys29 lines the Zn(2+) pocket. The 'HIGH' region signature appears at 31 to 41; it reads PTVYNYIHIGN. Residues Cys214, His239, and Glu243 each contribute to the Zn(2+) site. A 'KMSKS' region motif is present at residues 273–277; sequence KMSKS. Residue Lys276 participates in ATP binding.

It belongs to the class-I aminoacyl-tRNA synthetase family. In terms of assembly, monomer. The cofactor is Zn(2+).

The protein localises to the cytoplasm. It catalyses the reaction tRNA(Cys) + L-cysteine + ATP = L-cysteinyl-tRNA(Cys) + AMP + diphosphate. This is Cysteine--tRNA ligase from Lactobacillus gasseri (strain ATCC 33323 / DSM 20243 / BCRC 14619 / CIP 102991 / JCM 1131 / KCTC 3163 / NCIMB 11718 / NCTC 13722 / AM63).